A 685-amino-acid polypeptide reads, in one-letter code: ATP-dependent permease MDL1 (685 aa).

The segment covering 48-70 has biased composition (polar residues); it reads FNSKSSTAPNTEANSNGSTNSQS. The interval 48–76 is disordered; the sequence is FNSKSSTAPNTEANSNGSTNSQSDTKKPR. A glycan (N-linked (GlcNAc...) asparagine) is linked at asparagine 63. A helical membrane pass occupies residues 96 to 116; it reads LIFFALICLVTTSATSMALPL. The ABC transmembrane type-1 domain maps to 97 to 407; that stretch reads IFFALICLVT…LGNFYTELMK (311 aa). Positions 125-147 are disordered; it reads TKKDDDDDKDNDNDDKDDTQPSD. Residues 129–141 are compositionally biased toward acidic residues; that stretch reads DDDDKDNDNDDKD. The chain crosses the membrane as a helical span at residues 158–180; sequence FYSALGVLFIVSASTNFGRIYLL. A glycan (N-linked (GlcNAc...) asparagine) is linked at asparagine 239. Residues 266 to 282 traverse the membrane as a helical segment; it reads LCMSLIFPPLITMSWFY. The N-linked (GlcNAc...) asparagine glycan is linked to asparagine 336. A run of 2 helical transmembrane segments spans residues 353–373 and 381–401; these read GFIG…LIGA and LSSF…LGNF. The ABC transporter domain maps to 440 to 680; the sequence is IEFKGIDFTY…PNSQFNKLLK (241 aa). 475 to 482 contributes to the ATP binding site; it reads GPSGSGKS. 2 N-linked (GlcNAc...) asparagine glycosylation sites follow: asparagine 553 and asparagine 576.

The protein belongs to the ABC transporter superfamily. ABCB family. Mitochondrial peptide exporter (TC 3.A.1.212) subfamily.

It is found in the membrane. The protein is ATP-dependent permease MDL1 (MDL1) of Candida albicans (Yeast).